The chain runs to 397 residues: DnaJ homolog subfamily A member 4 (397 aa).

Positions 4 to 70 constitute a J domain; that stretch reads ETQYYDILGV…RDIYDQGGEQ (67 aa). A Phosphoserine modification is found at serine 18. The CR-type zinc-finger motif lies at 122–206; sequence GITKKLALQK…CSGAKVTREK (85 aa). Residues cysteine 135, cysteine 138, cysteine 151, cysteine 154, cysteine 178, cysteine 181, cysteine 194, and cysteine 197 each contribute to the Zn(2+) site. 4 CXXCXGXG motif repeats span residues 135 to 142, 151 to 158, 178 to 185, and 194 to 201; these read CEKCEGIG, CPLCKGRG, CIECKGQG, and CENCSGAK. A compositionally biased stretch (basic and acidic residues) spans 366–380; it reads EFNPNEQSWRQHREA. Residues 366 to 397 form a disordered region; sequence EFNPNEQSWRQHREAYEEDDEEPRAGVQCQTA. A Cysteine methyl ester modification is found at cysteine 394. Cysteine 394 carries the S-farnesyl cysteine lipid modification. A propeptide spans 395 to 397 (removed in mature form); it reads QTA.

As to expression, specifically expressed in testis and heart.

It is found in the membrane. This is DnaJ homolog subfamily A member 4 (Dnaja4) from Mus musculus (Mouse).